The primary structure comprises 86 residues: MEESHAVREMIKIIAKWDPFKYGEEFYETEAVDVVQAVYDENDPDLLAKSIQQIFETSFEQTLPIASCREVAGQLLFIKNSSSCTP.

This is an uncharacterized protein from Bacillus subtilis (strain 168).